Reading from the N-terminus, the 404-residue chain is Protein translocase subunit SecF (404 aa).

6 helical membrane-spanning segments follow: residues 15–35, 225–245, 246–266, 275–295, 327–347, and 355–375; these read KWYF…SMGA, LLAT…RFEL, IYGI…VGAF, LTVV…TIVV, ILTS…GGEV, and LVIG…PMLV.

Belongs to the SecD/SecF family. SecF subfamily. As to quaternary structure, forms a complex with SecD. Part of the essential Sec protein translocation apparatus which comprises SecA, SecYEG and auxiliary proteins SecDF. Other proteins may also be involved.

The protein resides in the cell inner membrane. Functionally, part of the Sec protein translocase complex. Interacts with the SecYEG preprotein conducting channel. SecDF uses the proton motive force (PMF) to complete protein translocation after the ATP-dependent function of SecA. This chain is Protein translocase subunit SecF, found in Koribacter versatilis (strain Ellin345).